Reading from the N-terminus, the 531-residue chain is Dihydropyrimidinase (531 aa).

Zn(2+) is bound by residues H103, H105, and K193. K193 carries the post-translational modification N6-carboxylysine. Y198 contacts substrate. Zn(2+) is bound by residues H226 and H282. S332 provides a ligand contact to substrate. D359 contacts Zn(2+). N380 is a binding site for substrate.

The protein belongs to the metallo-dependent hydrolases superfamily. Hydantoinase/dihydropyrimidinase family. As to quaternary structure, homotetramer. Zn(2+) serves as cofactor. Post-translationally, carboxylation allows a single lysine to coordinate two zinc ions.

It is found in the endoplasmic reticulum. It carries out the reaction 5,6-dihydrouracil + H2O = 3-(carbamoylamino)propanoate + H(+). Its pathway is amino-acid biosynthesis; beta-alanine biosynthesis. In terms of biological role, catalyzes the second step of the reductive pyrimidine degradation, the reversible hydrolytic ring opening of dihydropyrimidines. Can catalyze the ring opening of 5,6-dihydrouracil to N-carbamoyl-alanine and of 5,6-dihydrothymine to N-carbamoyl-amino isobutyrate. Involved in the recycling of nitrogen from nucleobases to general nitrogen metabolism. In Arabidopsis thaliana (Mouse-ear cress), this protein is Dihydropyrimidinase.